The following is a 173-amino-acid chain: ATP-dependent protease subunit HslV (173 aa).

Residue threonine 2 is part of the active site. Residues glycine 158, aspartate 161, and threonine 164 each coordinate Na(+).

Belongs to the peptidase T1B family. HslV subfamily. As to quaternary structure, a double ring-shaped homohexamer of HslV is capped on each side by a ring-shaped HslU homohexamer. The assembly of the HslU/HslV complex is dependent on binding of ATP.

It localises to the cytoplasm. The enzyme catalyses ATP-dependent cleavage of peptide bonds with broad specificity.. Allosterically activated by HslU binding. Its function is as follows. Protease subunit of a proteasome-like degradation complex believed to be a general protein degrading machinery. This Mannheimia succiniciproducens (strain KCTC 0769BP / MBEL55E) protein is ATP-dependent protease subunit HslV.